The sequence spans 338 residues: Serpentine receptor class alpha-31 (338 aa).

7 helical membrane-spanning segments follow: residues 23-43, 59-79, 108-125, 142-162, 188-208, 240-260, and 276-296; these read GNHCFILLIIISSVFLTVFAI, LLFSAIINGVVHHWSIAGIRI, LYYYTNLFSSLCCISLFF, FSKIFLLFQSISPFGILYWIF, VNEFRLYILGTFFVLSFVIFF, VCIIIATQITCLVTTASTTEI, and SIAFMTGLTYSNFFLPIIIIY.

Belongs to the nematode receptor-like protein sra family.

It is found in the membrane. In Caenorhabditis elegans, this protein is Serpentine receptor class alpha-31 (sra-31).